The sequence spans 58 residues: Ribulose bisphosphate carboxylase large chain (58 aa).

The propeptide occupies 1–2 (MS). Pro-3 carries the N-acetylproline modification. Residue Lys-14 is modified to N6,N6,N6-trimethyllysine.

Belongs to the RuBisCO large chain family. Type I subfamily. Heterohexadecamer of 8 large chains and 8 small chains.

The protein localises to the plastid. It localises to the chloroplast. It carries out the reaction 2 (2R)-3-phosphoglycerate + 2 H(+) = D-ribulose 1,5-bisphosphate + CO2 + H2O. The enzyme catalyses D-ribulose 1,5-bisphosphate + O2 = 2-phosphoglycolate + (2R)-3-phosphoglycerate + 2 H(+). Functionally, ruBisCO catalyzes two reactions: the carboxylation of D-ribulose 1,5-bisphosphate, the primary event in carbon dioxide fixation, as well as the oxidative fragmentation of the pentose substrate in the photorespiration process. Both reactions occur simultaneously and in competition at the same active site. This chain is Ribulose bisphosphate carboxylase large chain (rbcL), found in Weinmannia silvicola (Towai).